The chain runs to 318 residues: Quinolinate synthase (318 aa).

Iminosuccinate is bound by residues His34 and Ser51. [4Fe-4S] cluster is bound at residue Cys96. Residues 122–124 and Ser139 each bind iminosuccinate; that span reads YIN. Cys182 serves as a coordination point for [4Fe-4S] cluster. Residues 208–210 and Thr225 contribute to the iminosuccinate site; that span reads HPE. [4Fe-4S] cluster is bound at residue Cys275.

The protein belongs to the quinolinate synthase family. Type 2 subfamily. The cofactor is [4Fe-4S] cluster.

It localises to the cytoplasm. The catalysed reaction is iminosuccinate + dihydroxyacetone phosphate = quinolinate + phosphate + 2 H2O + H(+). It functions in the pathway cofactor biosynthesis; NAD(+) biosynthesis; quinolinate from iminoaspartate: step 1/1. In terms of biological role, catalyzes the condensation of iminoaspartate with dihydroxyacetone phosphate to form quinolinate. This Synechocystis sp. (strain ATCC 27184 / PCC 6803 / Kazusa) protein is Quinolinate synthase.